We begin with the raw amino-acid sequence, 308 residues long: Methionyl-tRNA formyltransferase (308 aa).

Residue 107–110 (SLLP) participates in (6S)-5,6,7,8-tetrahydrofolate binding.

Belongs to the Fmt family.

It carries out the reaction L-methionyl-tRNA(fMet) + (6R)-10-formyltetrahydrofolate = N-formyl-L-methionyl-tRNA(fMet) + (6S)-5,6,7,8-tetrahydrofolate + H(+). Attaches a formyl group to the free amino group of methionyl-tRNA(fMet). The formyl group appears to play a dual role in the initiator identity of N-formylmethionyl-tRNA by promoting its recognition by IF2 and preventing the misappropriation of this tRNA by the elongation apparatus. In Carboxydothermus hydrogenoformans (strain ATCC BAA-161 / DSM 6008 / Z-2901), this protein is Methionyl-tRNA formyltransferase.